A 227-amino-acid polypeptide reads, in one-letter code: Small ribosomal subunit protein uS3 (227 aa).

The KH type-2 domain occupies 39 to 108 (IRKFVEERYK…DVTVNVDEVK (70 aa)).

The protein belongs to the universal ribosomal protein uS3 family. In terms of assembly, part of the 30S ribosomal subunit. Forms a tight complex with proteins S10 and S14.

Binds the lower part of the 30S subunit head. Binds mRNA in the 70S ribosome, positioning it for translation. This chain is Small ribosomal subunit protein uS3, found in Persephonella marina (strain DSM 14350 / EX-H1).